Reading from the N-terminus, the 1183-residue chain is MAGQVVQYGRHRKRRNYARISEVLELPNLIEIQTKSYEWFLREGLIEMFRDISPIEDFTGNLSLEFVDYRLGEPKYDLEESKNRDATYAAPLRVKVRLIIKETGEVKEQEVFMGDFPLMTDTGTFVINGAERVIVSQLVRSPSVYFNEKIDKNGRENYDATIIPNRGAWLEYETDAKDVVYVRIDRTRKLPLTVLLRALGFSSDQEIVDLLGDNEYLRNTLEKDGTENTEQALLEIYERLRPGEPPTVENAKSLLYSRFFDPKRYDLASVGRYKTNKKLHLKHRLFNQKLAEPIVNTETGEIVVEEGTVLDRRKIDEIMDVLESNANSEVFELHGSVIDEPVEIQSIKVYVPNDDEGRTTTVIGNAFPDSEVKCITPADIIASMSYFFNLLSGIGYTDDIDHLGNRRLRSVGELLQNQFRIGLSRMERVVRERMSIQDTESITPQQLINIRPVIASIKEFFGSSQLSQFMYQSNPLSDLTHKRRLSALGPGGLTRERAQMEVRDVHYSHYGRMCPIETPEGPNIGLINSLSSYARVNEFGFIETPYRKVDLDTHAITDQIDYLTADEEDSYVVAQANSKLDENGRFMDDEVVCRFRGNNTVMAKEKMDYMDVSPKQVVSAATACIPFLENDDSNRALMGANMQRQAVPLMNPEAPFVGTGMEHVAARDSGAAITAKHRGRVEHVESNEILVRRLVEENGVEHEGELDRYPLAKFKRSNSGTCYNQRPIVAVGDVVEYNEILADGPSMELGEMALGRNVVVGFMTWDGYNYEDAVIMSERLVKDDVYTSIHIEEYESEARDTKLGPEEITRDIPNVSESALKNLDDRGIVYIGAEVKDGDILVGKVTPKGVTELTAEERLLHAIFGEKAREVRDTSLRVPHGAGGIVLDVKVFNREEGDDTLSPGVNQLVRVYIVQKRKIHVGDKMCGRHGNKGVISKIVPEEDMPYLPDGRPIDIMLNPLGVPSRMNIGQVLELHLGMAAKNLGIHVASPVFDGANDDDVWSTIEEAGMARDGKTVLYDGRTGEPFDNRISVGVMYMLKLAHMVDDKLHARSTGPYSLVTQQPLGGKAQFGGQRFGEMEVWALEAYGAAYTLQEILTYKSDDTVGRVKTYEAIVKGENISRPSVPESFRVLMKELQSLGLDVKVMDEQDNEIEMTDVDDDDVVERKVDLQQNDAPETQKEVTD.

Belongs to the RNA polymerase beta chain family. In terms of assembly, the RNAP catalytic core consists of 2 alpha, 1 beta, 1 beta' and 1 omega subunit. When a sigma factor is associated with the core the holoenzyme is formed, which can initiate transcription.

The catalysed reaction is RNA(n) + a ribonucleoside 5'-triphosphate = RNA(n+1) + diphosphate. In terms of biological role, DNA-dependent RNA polymerase catalyzes the transcription of DNA into RNA using the four ribonucleoside triphosphates as substrates. This is DNA-directed RNA polymerase subunit beta from Staphylococcus aureus (strain JH9).